Reading from the N-terminus, the 495-residue chain is UDP-glycosyltransferase 73C9 (495 aa).

UDP-alpha-D-glucose is bound at residue glycine 23–isoleucine 26. Histidine 24 serves as the catalytic Proton acceptor. Residue aspartate 129 is the Charge relay of the active site. UDP-alpha-D-glucose contacts are provided by residues tryptophan 355–glutamine 358, histidine 373–glutamate 381, and aspartate 397–glutamine 398.

The protein belongs to the UDP-glycosyltransferase family.

Possesses very weak glucosyltransferase activity toward 2,4,5-trichlorophenol (TCP), when assayed with high concentrations of TCP. The chain is UDP-glycosyltransferase 73C9 from Barbarea vulgaris (Yellow rocket).